The sequence spans 52 residues: ATP synthase protein 8 (52 aa).

Residues 10–30 (FLMSLMIMMILIFMTINFYFF) traverse the membrane as a helical segment.

This sequence belongs to the ATPase protein 8 family. F-type ATPases have 2 components, CF(1) - the catalytic core - and CF(0) - the membrane proton channel.

It localises to the mitochondrion membrane. Mitochondrial membrane ATP synthase (F(1)F(0) ATP synthase or Complex V) produces ATP from ADP in the presence of a proton gradient across the membrane which is generated by electron transport complexes of the respiratory chain. F-type ATPases consist of two structural domains, F(1) - containing the extramembraneous catalytic core and F(0) - containing the membrane proton channel, linked together by a central stalk and a peripheral stalk. During catalysis, ATP synthesis in the catalytic domain of F(1) is coupled via a rotary mechanism of the central stalk subunits to proton translocation. Part of the complex F(0) domain. Minor subunit located with subunit a in the membrane. This chain is ATP synthase protein 8 (MT-ATP8), found in Rhipicephalus sanguineus (Brown dog tick).